A 200-amino-acid chain; its full sequence is Recombination protein RecR (200 aa).

The C4-type zinc-finger motif lies at 57 to 72 (CERCRNYAQSTLCPVC). In terms of domain architecture, Toprim spans 80 to 175 (SLVCIVATPG…GVSRIAQGVP (96 aa)).

This sequence belongs to the RecR family.

In terms of biological role, may play a role in DNA repair. It seems to be involved in an RecBC-independent recombinational process of DNA repair. It may act with RecF and RecO. In Alcanivorax borkumensis (strain ATCC 700651 / DSM 11573 / NCIMB 13689 / SK2), this protein is Recombination protein RecR.